Here is a 343-residue protein sequence, read N- to C-terminus: L-threonine 3-dehydrogenase (343 aa).

Zn(2+) is bound at residue Cys40. Residues Thr42 and His45 each act as charge relay system in the active site. Zn(2+) is bound by residues His65, Glu66, Cys95, Cys98, Cys101, and Cys109. NAD(+) contacts are provided by residues Ile177, Asp197, Arg202, 264 to 266 (LGI), and 288 to 289 (IY).

This sequence belongs to the zinc-containing alcohol dehydrogenase family. As to quaternary structure, homotetramer. Zn(2+) is required as a cofactor.

It is found in the cytoplasm. The catalysed reaction is L-threonine + NAD(+) = (2S)-2-amino-3-oxobutanoate + NADH + H(+). It functions in the pathway amino-acid degradation; L-threonine degradation via oxydo-reductase pathway; glycine from L-threonine: step 1/2. Its function is as follows. Catalyzes the NAD(+)-dependent oxidation of L-threonine to 2-amino-3-ketobutyrate. In Vibrio vulnificus (strain CMCP6), this protein is L-threonine 3-dehydrogenase.